The sequence spans 708 residues: F-box only protein 43 (708 aa).

The interval 35–55 (MSQRHSGQAGTEAGNGADSPP) is disordered. Serine 76 is subject to Phosphoserine. A Phosphothreonine modification is found at threonine 234. A disordered region spans residues 320-426 (PSPEVRGSIS…ISEGQLSSDE (107 aa)). A compositionally biased stretch (polar residues) spans 327 to 337 (SISTPEDSGFN). Serine 334 is subject to Phosphoserine. The segment covering 374–385 (KTRHLGRSRRLS) has biased composition (basic residues). The span at 399 to 411 (EKQIVHPDSEKRA) shows a compositional bias: basic and acidic residues. An F-box domain is found at 490 to 547 (MGIEKLDILTELKYRNLKHILAMVLESLTAESLCSVWKVSRNWREIVVQDKNANRRRK). The ZBR-type zinc finger occupies 636 to 684 (ALKPCPRCQSPAKYQPYKKRGLCSRTACGFDFCVLCLCAYHGSEECSRG). Zn(2+) is bound by residues cysteine 640, cysteine 643, cysteine 658, cysteine 663, cysteine 668, cysteine 671, histidine 676, and cysteine 681. Positions 682–708 (SRGAAKPRNRKDALPGSAQSKRNLKRL) are disordered.

As to quaternary structure, part of a SCF (SKP1-cullin-F-box) protein ligase complex. According to PubMed:34595750 interaction with SKP1 does not occur. Interacts with ANAPC2; the interaction is direct, ANAPC4, CDC16, CDC23; the interaction is direct, ANAPC10; the interaction is direct and CDC26, during spermatogenesis. May interact with CDC20. Phosphorylated on Ser-76, Thr-234 and Ser-334 in response to calcium, which is a prerequisite for ubiquitination and proteasomal degradation. In terms of processing, ubiquitinated in response to calcium, which promotes proteasomal degradation. In terms of tissue distribution, expressed in the testis.

The protein operates within protein modification; protein ubiquitination. Required to establish and maintain the arrest of oocytes at the second meiotic metaphase until fertilization. Acts by inhibiting the anaphase-promoting complex/cyclosome (APC/C) ubiquitin ligase. Probably recognizes and binds to some phosphorylated proteins and promotes their ubiquitination and degradation. Plays a vital role in modulating the ubiquitilation of CCNB1 and CDK1 during gametogenesis. This is F-box only protein 43 (FBXO43) from Homo sapiens (Human).